The following is a 120-amino-acid chain: MSKLNVTNARRKTRVRIALRRTANGRPRLSVFRSSKHIYAQVIDDLKGETLASASSLEKSMREAGNTGANIDAAKAVGKLLAERAVKQGVKEVVFDRGGYLYHGRVKALADAARESGLSF.

This sequence belongs to the universal ribosomal protein uL18 family. In terms of assembly, part of the 50S ribosomal subunit; part of the 5S rRNA/L5/L18/L25 subcomplex. Contacts the 5S and 23S rRNAs.

Functionally, this is one of the proteins that bind and probably mediate the attachment of the 5S RNA into the large ribosomal subunit, where it forms part of the central protuberance. This Rhodopseudomonas palustris (strain HaA2) protein is Large ribosomal subunit protein uL18.